We begin with the raw amino-acid sequence, 137 residues long: Large ribosomal subunit protein uL16 (137 aa).

Belongs to the universal ribosomal protein uL16 family. Part of the 50S ribosomal subunit.

Binds 23S rRNA and is also seen to make contacts with the A and possibly P site tRNAs. The chain is Large ribosomal subunit protein uL16 from Rhizobium johnstonii (strain DSM 114642 / LMG 32736 / 3841) (Rhizobium leguminosarum bv. viciae).